The following is a 564-amino-acid chain: Zyxin (564 aa).

Ala2 bears the N-acetylalanine mark. Residues 30 to 141 (VAPKPKVNPF…TQLPPQPREK (112 aa)) form a disordered region. Pro residues-rich tracts occupy residues 63-78 (IPPP…PPPL) and 93-109 (FPPP…PPAP). A phosphoserine mark is found at Ser117, Ser144, Ser170, and Ser171. Residues 162–344 (NDPFKARVSS…RSPGGPGPLT (183 aa)) are disordered. Composition is skewed to pro residues over residues 174-189 (VPPP…PSTK) and 197-214 (PLPP…PQPQ). Thr180 is subject to Phosphothreonine. Over residues 234 to 243 (QPVSSANTQP) the composition is skewed to polar residues. Arg244 is modified (asymmetric dimethylarginine). Residues 255–275 (PKFAPVAPKFTPVVSKFSPGA) are compositionally biased toward low complexity. N6-acetyllysine occurs at positions 256 and 263. A Phosphothreonine modification is found at Thr265. Residue Lys270 is modified to N6-acetyllysine. Phosphoserine occurs at positions 272 and 300. The segment covering 294-310 (SSVSTGSPQPPSFTYAQ) has biased composition (polar residues). Over residues 311–322 (QKEKPLVQEKQH) the composition is skewed to basic and acidic residues. Position 336 is a phosphoserine (Ser336). LIM zinc-binding domains follow at residues 376–435 (CGKC…TLEK), 436–495 (CNTC…YAPR), and 496–562 (CSVC…SARA).

Belongs to the zyxin/ajuba family. In terms of assembly, interacts, via the Pro-rich regions, with the EVH1 domains of ENAH, EVL and VASP. Interacts with the first LIM domain of TES. Interacts with SYNPO2.

It localises to the cytoplasm. The protein resides in the cytoskeleton. It is found in the cell junction. The protein localises to the focal adhesion. Its subcellular location is the nucleus. Functionally, adhesion plaque protein. Binds alpha-actinin and the CRP protein. Important for targeting TES and ENA/VASP family members to focal adhesions and for the formation of actin-rich structures. May be a component of a signal transduction pathway that mediates adhesion-stimulated changes in gene expression. The chain is Zyxin (Zyx) from Mus musculus (Mouse).